We begin with the raw amino-acid sequence, 553 residues long: Dihydrolipoyllysine-residue acetyltransferase component of pyruvate dehydrogenase complex (553 aa).

The Lipoyl-binding 1 domain occupies 2–77; sequence AFSVQMPALG…EVGGELAVIG (76 aa). Position 43 is an N6-lipoyllysine (lysine 43). The segment at 81–125 is disordered; the sequence is DAGEAAAPAPEKVPAAQPESKPAPEPPPVQPTSGAPAGGDAKPVL. Residues 84 to 100 show a composition bias toward low complexity; the sequence is EAAAPAPEKVPAAQPES. Over residues 101-110 the composition is skewed to pro residues; sequence KPAPEPPPVQ. The Lipoyl-binding 2 domain maps to 121–196; sequence AKPVLMPELG…PVGGELARIG (76 aa). N6-lipoyllysine is present on lysine 162. 2 disordered regions span residues 204 to 238 and 278 to 321; these read APAPKPAPKPVPEPAPTPKAEPAPSPPAAQPAGAA and AAAE…TQKA. Residues 206–232 show a composition bias toward pro residues; that stretch reads APKPAPKPVPEPAPTPKAEPAPSPPAA. In terms of domain architecture, Peripheral subunit-binding (PSBD) spans 243 to 280; the sequence is YVTPLVRKLASENNIDLAGVTGTGVGGRIRKQDVLAAA. A compositionally biased stretch (low complexity) spans 288–300; sequence APAPAAQAAAAPA. Catalysis depends on residues histidine 523 and aspartate 527.

It belongs to the 2-oxoacid dehydrogenase family. Forms a 24-polypeptide structural core with octahedral symmetry. Part of the PDH complex, consisting of multiple copies of AceE (E1), DlaT (E2) and Lpd (E3). It depends on (R)-lipoate as a cofactor.

It carries out the reaction N(6)-[(R)-dihydrolipoyl]-L-lysyl-[protein] + acetyl-CoA = N(6)-[(R)-S(8)-acetyldihydrolipoyl]-L-lysyl-[protein] + CoA. Its function is as follows. Component of the pyruvate dehydrogenase (PDH) complex, that catalyzes the overall conversion of pyruvate to acetyl-CoA and CO(2). The chain is Dihydrolipoyllysine-residue acetyltransferase component of pyruvate dehydrogenase complex (dlaT) from Mycobacterium bovis (strain ATCC BAA-935 / AF2122/97).